Here is a 66-residue protein sequence, read N- to C-terminus: MKPLLVVFVFLFLWDPVLAGINSLSSEMHKKCYKNGICRLECYESEMLVAYCMFQLECCVKGNPAP.

Residues 1 to 19 (MKPLLVVFVFLFLWDPVLA) form the signal peptide. Intrachain disulfides connect Cys32-Cys58, Cys38-Cys52, and Cys42-Cys59.

The protein belongs to the beta-defensin family.

It is found in the secreted. In terms of biological role, has antibacterial activity. The sequence is that of Beta-defensin 134 (DEFB134) from Homo sapiens (Human).